A 364-amino-acid chain; its full sequence is S-adenosylmethionine:tRNA ribosyltransferase-isomerase (364 aa).

Belongs to the QueA family. As to quaternary structure, monomer.

The protein resides in the cytoplasm. It carries out the reaction 7-aminomethyl-7-carbaguanosine(34) in tRNA + S-adenosyl-L-methionine = epoxyqueuosine(34) in tRNA + adenine + L-methionine + 2 H(+). It participates in tRNA modification; tRNA-queuosine biosynthesis. Its function is as follows. Transfers and isomerizes the ribose moiety from AdoMet to the 7-aminomethyl group of 7-deazaguanine (preQ1-tRNA) to give epoxyqueuosine (oQ-tRNA). This is S-adenosylmethionine:tRNA ribosyltransferase-isomerase from Lachnoclostridium phytofermentans (strain ATCC 700394 / DSM 18823 / ISDg) (Clostridium phytofermentans).